The sequence spans 500 residues: Glycerol kinase (500 aa).

Residue Thr-12 coordinates ADP. Thr-12, Thr-13, and Ser-14 together coordinate ATP. Thr-12 is a sn-glycerol 3-phosphate binding site. Residue Arg-16 coordinates ADP. Residues Arg-82, Glu-83, Tyr-134, and Asp-243 each coordinate sn-glycerol 3-phosphate. Positions 82, 83, 134, 243, and 244 each coordinate glycerol. Residues Thr-265 and Gly-308 each coordinate ADP. ATP is bound by residues Thr-265, Gly-308, Gln-312, and Gly-411. Gly-411 is a binding site for ADP.

Belongs to the FGGY kinase family.

It carries out the reaction glycerol + ATP = sn-glycerol 3-phosphate + ADP + H(+). Its pathway is polyol metabolism; glycerol degradation via glycerol kinase pathway; sn-glycerol 3-phosphate from glycerol: step 1/1. With respect to regulation, inhibited by fructose 1,6-bisphosphate (FBP). Its function is as follows. Key enzyme in the regulation of glycerol uptake and metabolism. Catalyzes the phosphorylation of glycerol to yield sn-glycerol 3-phosphate. This is Glycerol kinase from Chelativorans sp. (strain BNC1).